We begin with the raw amino-acid sequence, 130 residues long: Small ribosomal subunit protein uS9 (130 aa).

The protein belongs to the universal ribosomal protein uS9 family.

This chain is Small ribosomal subunit protein uS9, found in Paraburkholderia phytofirmans (strain DSM 17436 / LMG 22146 / PsJN) (Burkholderia phytofirmans).